Reading from the N-terminus, the 208-residue chain is Inducible T-cell costimulator (208 aa).

Residues 1–19 (MKSDLWYFLLFCFQVEALT) form the signal peptide. The Extracellular portion of the chain corresponds to 20–140 (GEINDSTKSE…YESQTCCQLK (121 aa)). Asn-23 carries an N-linked (GlcNAc...) asparagine glycan. The 103-residue stretch at 30–132 (MFTFHDGGVQ…ISREYLNVYE (103 aa)) folds into the Ig-like V-type domain. Disulfide bonds link Cys-42-Cys-108 and Cys-63-Cys-82. The N-linked (GlcNAc...) asparagine glycan is linked to Asn-122. Residues 141–161 (FWLPIGCAAFVVVYIFGCIFL) traverse the membrane as a helical segment. Residues 162–208 (CWLTKKKYRSSVHDPNSEYMFMAAVNTAKKPGLTGVTHNLELCGTQA) are Cytoplasmic-facing.

Homodimer; disulfide-linked. Interacts with ICOSLG. Interacts with PIK3R1. Interacts with TBK1; this interaction is critical for the maturation of T follicular regulatory cells. N-glycosylated.

The protein resides in the cell membrane. Functionally, stimulatory receptor expressed in activated or antigen-experienced T-cells that plays an important role in the immune response. Upon binding to its ligand ICOSL expressed on antigen presenting cells (APCs), delivers costimulatory signals that enhances all basic T-cell responses to a foreign antigen, namely proliferation, secretion of lymphokines including IL10, up-regulation of molecules that mediate cell-cell interaction, and effective help for antibody secretion by B-cells. Also acts as a costimulatory receptor critical for the differentiation of T follicular regulatory cells upon immune challenges such as viral infection. Mechanistically, potentiates TCR-induced calcium flux by augmenting PLCG1 activation and actin remodeling. In addition, activates PI3K signaling pathways independently of calcium flux. Essential both for efficient interaction between T and B-cells and for normal antibody responses to T-cell dependent antigens. Prevents the apoptosis of pre-activated T-cells. Plays a critical role in CD40-mediated class switching of immunoglobin isotypes. This Canis lupus familiaris (Dog) protein is Inducible T-cell costimulator (ICOS).